Reading from the N-terminus, the 324-residue chain is Adipolin (324 aa).

The signal sequence occupies residues 1 to 24; sequence MRCWVWLLVAIVLCQQLSVVRVLA. Disordered stretches follow at residues 28 to 66 and 83 to 121; these read ERKKGKDPHQFTEPFNVSLSNSEELHETDKLSETPDPGL and GANSKKKCKGKDKKLRGLFGPPGPPGPQGPPGPPGMPGA. Polar residues predominate over residues 40–49; the sequence is EPFNVSLSNS. The N-linked (GlcNAc...) asparagine glycan is linked to asparagine 43. Residues 50–60 are compositionally biased toward basic and acidic residues; the sequence is EELHETDKLSE. Residues 86-98 are compositionally biased toward basic residues; it reads SKKKCKGKDKKLR. Residues 103–118 are compositionally biased toward pro residues; the sequence is PPGPPGPQGPPGPPGM. The C1q domain maps to 169–324; the sequence is YRRVDEGFHC…SDFMGILMGL (156 aa).

Belongs to the adipolin/erythroferrone family. In terms of assembly, homomultimer; disulfide-linked.

The protein resides in the secreted. Its function is as follows. Insulin-sensitizing adipocyte-secreted protein (adipokine) that regulates glucose metabolism in liver and adipose tissue. The chain is Adipolin (c1qtnf12) from Xenopus tropicalis (Western clawed frog).